A 230-amino-acid chain; its full sequence is MTASAPVITVDGPSGAGKGTLCKALAESLDWRLLDSGAIYRVLALAALHHQVDISTEEALVPLAAHLDVRFVSQNGQLKVILEGEDVSNEIRTETVGNTASQAAAFPRVREALLRRQRAFREPPGLIADGRDMGTVVFPDAPVKIFLDASSQERAHRRMLQLQEKGFNVNFERLLSEIQERDSRDRNRAIAPLVPATDALVLDSTSMSIEQVIEQALAYAQRILALPLKK.

12–20 (GPSGAGKGT) contacts ATP.

Belongs to the cytidylate kinase family. Type 1 subfamily.

The protein localises to the cytoplasm. The enzyme catalyses CMP + ATP = CDP + ADP. It catalyses the reaction dCMP + ATP = dCDP + ADP. In Yersinia enterocolitica serotype O:8 / biotype 1B (strain NCTC 13174 / 8081), this protein is Cytidylate kinase.